Reading from the N-terminus, the 109-residue chain is Aquaporin-2 (109 aa).

Over serine 1–arginine 6 the chain is Cytoplasmic. The helical transmembrane segment at alanine 7–leucine 27 threads the bilayer. Residues asparagine 28–serine 35 are Extracellular-facing. A helical transmembrane segment spans residues valine 36–leucine 54. Residues glycine 55–glycine 59 lie on the Cytoplasmic side of the membrane. An intramembrane region (discontinuously helical) is located at residues alanine 60–alanine 69. The short motif at asparagine 63–alanine 65 is the NPA 1 element. Over cysteine 70 to arginine 80 the chain is Cytoplasmic. A helical transmembrane segment spans residues alanine 81–isoleucine 102. At threonine 103–glycine 109 the chain is on the extracellular side.

The protein belongs to the MIP/aquaporin (TC 1.A.8) family. In terms of assembly, homotetramer. Post-translationally, serine phosphorylation is necessary and sufficient for expression at the apical membrane. Endocytosis is not phosphorylation-dependent. N-glycosylated.

It is found in the apical cell membrane. The protein localises to the basolateral cell membrane. The protein resides in the cell membrane. It localises to the cytoplasmic vesicle membrane. Its subcellular location is the golgi apparatus. It is found in the trans-Golgi network membrane. It catalyses the reaction H2O(in) = H2O(out). The enzyme catalyses glycerol(in) = glycerol(out). Forms a water-specific channel that provides the plasma membranes of renal collecting duct with high permeability to water, thereby permitting water to move in the direction of an osmotic gradient. Plays an essential role in renal water homeostasis. Could also be permeable to glycerol. The sequence is that of Aquaporin-2 from Dugong dugon (Dugong).